A 459-amino-acid polypeptide reads, in one-letter code: Polycomb protein mes-6 (459 aa).

5 WD repeats span residues 146–186, 192–231, 305–346, 370–409, and 415–454; these read SVGW…CLIV, CHAG…VKEH, MHSD…GEVE, SGSA…ETNP, and VGSR…VDAK.

The protein belongs to the WD repeat ESC family. In terms of assembly, interacts directly with the N-terminal domain of mes-2. Forms a heterotrimeric complex with mes-2 and mes-3. Does not interact with mes-4. As to expression, in adults, it is predominantly expressed in the germline, and weakly expressed in intestinal cells.

It localises to the nucleus. Polycomb group (PcG) protein. PcG proteins act by forming multiprotein complexes, which are required to maintain the transcriptionally repressive state of homeotic genes throughout development. In association with the nfya-1-NF-Y complex, may play a role in repressing the expression of the homeobox protein egl-5 in tissues such as the head. PcG proteins are not required to initiate repression, but to maintain it during later stages of development. The mes-2/mes-3/mes-6 complex may participate in the global inactivation of the X chromosomes in germline cells. The complex may act via methylation of histone H3 'Lys-27', rendering chromatin heritably changed in its expressibility. This complex is required to exclude mes-4 from the inactivated X-chromosomes in germline cells. Required for small-RNA-induced H3K27 trimethylation. The chain is Polycomb protein mes-6 from Caenorhabditis elegans.